Reading from the N-terminus, the 156-residue chain is Anaerobic nitrite reductase HB2 (156 aa).

Positions 2–151 (GFTDKQEALV…LASAIKAEMH (150 aa)) constitute a Globin domain. A Homodimerization motif is present at residues 35-39 (EIAPV). Residues Ser45, Lys59, His63, and His98 each coordinate heme b. Positions 105–117 (DPHFEVVKEALLR) match the Homodimerization motif.

The protein belongs to the plant globin family. Homodimer. It depends on heme b as a cofactor.

The protein resides in the cytoplasm. The protein localises to the nucleus. It catalyses the reaction Fe(III)-heme b-[protein] + nitric oxide + H2O = Fe(II)-heme b-[protein] + nitrite + 2 H(+). Its function is as follows. Phytoglobin that reduces nitrite to nitric oxide (NO) under anoxic conditions (e.g. during flooding or in waterlogged soil). May not function as an oxygen storage or transport protein. Has an unusually high affinity for O(2) through an hexacoordinate heme iron because of a very low dissociation constant. This is Anaerobic nitrite reductase HB2 from Solanum lycopersicum (Tomato).